The primary structure comprises 960 residues: Leucine--tRNA ligase (960 aa).

The short motif at 71-82 is the 'HIGH' region element; it reads PYPSGAGLHVGH. The short motif at 729–733 is the 'KMSKS' region element; that stretch reads KMGKS. Lys732 contributes to the ATP binding site.

This sequence belongs to the class-I aminoacyl-tRNA synthetase family.

The protein localises to the cytoplasm. It catalyses the reaction tRNA(Leu) + L-leucine + ATP = L-leucyl-tRNA(Leu) + AMP + diphosphate. The polypeptide is Leucine--tRNA ligase (Corynebacterium diphtheriae (strain ATCC 700971 / NCTC 13129 / Biotype gravis)).